The following is a 161-amino-acid chain: Large ribosomal subunit protein uL15 (161 aa).

A disordered region spans residues 1 to 42; the sequence is MKLSDIADNAGSRKKRMRVGRGIGSGKGKQSGRGGKGQTARS. The segment covering 21 to 37 has biased composition (gly residues); it reads RGIGSGKGKQSGRGGKG.

The protein belongs to the universal ribosomal protein uL15 family. In terms of assembly, part of the 50S ribosomal subunit.

Functionally, binds to the 23S rRNA. This Bradyrhizobium diazoefficiens (strain JCM 10833 / BCRC 13528 / IAM 13628 / NBRC 14792 / USDA 110) protein is Large ribosomal subunit protein uL15.